Here is a 238-residue protein sequence, read N- to C-terminus: Orotidine 5'-phosphate decarboxylase (238 aa).

Substrate is bound by residues Asp10, Lys32, Asp59 to Thr68, Thr122, Arg184, Gln193, Gly213, and Arg214. The active-site Proton donor is Lys61.

It belongs to the OMP decarboxylase family. Type 1 subfamily. As to quaternary structure, homodimer.

The enzyme catalyses orotidine 5'-phosphate + H(+) = UMP + CO2. It participates in pyrimidine metabolism; UMP biosynthesis via de novo pathway; UMP from orotate: step 2/2. Its function is as follows. Catalyzes the decarboxylation of orotidine 5'-monophosphate (OMP) to uridine 5'-monophosphate (UMP). The sequence is that of Orotidine 5'-phosphate decarboxylase from Bacillus cereus (strain AH187).